The chain runs to 339 residues: Aspartate carbamoyltransferase catalytic subunit (339 aa).

2 residues coordinate carbamoyl phosphate: Arg69 and Thr70. Residue Lys97 coordinates L-aspartate. Positions 119, 149, and 152 each coordinate carbamoyl phosphate. Residues Arg182 and Arg237 each contribute to the L-aspartate site. Carbamoyl phosphate-binding residues include Gly278 and Pro279.

The protein belongs to the aspartate/ornithine carbamoyltransferase superfamily. ATCase family. As to quaternary structure, heterododecamer (2C3:3R2) of six catalytic PyrB chains organized as two trimers (C3), and six regulatory PyrI chains organized as three dimers (R2).

It catalyses the reaction carbamoyl phosphate + L-aspartate = N-carbamoyl-L-aspartate + phosphate + H(+). It participates in pyrimidine metabolism; UMP biosynthesis via de novo pathway; (S)-dihydroorotate from bicarbonate: step 2/3. In terms of biological role, catalyzes the condensation of carbamoyl phosphate and aspartate to form carbamoyl aspartate and inorganic phosphate, the committed step in the de novo pyrimidine nucleotide biosynthesis pathway. The chain is Aspartate carbamoyltransferase catalytic subunit from Hydrogenovibrio crunogenus (strain DSM 25203 / XCL-2) (Thiomicrospira crunogena).